Here is a 569-residue protein sequence, read N- to C-terminus: Potassium-transporting ATPase potassium-binding subunit (569 aa).

Helical transmembrane passes span 3–23 (TEIL…YPLG), 64–84 (FLKS…ILLV), 133–153 (FVIM…MAGI), 179–199 (ILFP…TPMG), 255–275 (IVEC…LGFY), 281–301 (LGYV…FCNV), 375–395 (FGGV…AVFI), 421–441 (IVSL…SYVW), 497–517 (LALI…AGLL), and 535–555 (VTFG…SFFP).

It belongs to the KdpA family. As to quaternary structure, the system is composed of three essential subunits: KdpA, KdpB and KdpC.

Its subcellular location is the cell inner membrane. Its function is as follows. Part of the high-affinity ATP-driven potassium transport (or Kdp) system, which catalyzes the hydrolysis of ATP coupled with the electrogenic transport of potassium into the cytoplasm. This subunit binds the periplasmic potassium ions and delivers the ions to the membrane domain of KdpB through an intramembrane tunnel. This is Potassium-transporting ATPase potassium-binding subunit from Parabacteroides distasonis (strain ATCC 8503 / DSM 20701 / CIP 104284 / JCM 5825 / NCTC 11152).